An 802-amino-acid polypeptide reads, in one-letter code: Fibroblast growth factor receptor 4 (802 aa).

The signal sequence occupies residues 1-21; it reads MRLLLALLGVLLSVPGPPVLS. One can recognise an Ig-like C2-type 1 domain in the interval 22-118; sequence LEASEEVELE…VLQNLTLITG (97 aa). At 22–369 the chain is on the extracellular side; that stretch reads LEASEEVELE…AAAPEARYTD (348 aa). Cys-57 and Cys-101 are disulfide-bonded. Asn-112 carries N-linked (GlcNAc...) asparagine glycosylation. Residues 119-148 form a disordered region; sequence DSLTSSNDDEDPKSHRDPSNRHSYPQQAPY. 2 Ig-like C2-type domains span residues 152–240 and 249–349; these read PQRM…YLLD and PILQ…AWLT. A disulfide bond links Cys-172 and Cys-224. N-linked (GlcNAc...) asparagine glycosylation is found at Asn-258, Asn-290, Asn-311, and Asn-322. Cys-271 and Cys-333 are disulfide-bonded. Residues 370 to 390 traverse the membrane as a helical segment; that stretch reads IILYASGSLALAVLLLLAGLY. Position 390 is a phosphotyrosine; in variant R-388 (Tyr-390). The Cytoplasmic segment spans residues 391 to 802; that stretch reads RGQALHGRHP…SFPFGSGVQT (412 aa). Residues 467–755 form the Protein kinase domain; it reads LVLGKPLGEG…VLLAVSEEYL (289 aa). Residues 473-481 and Lys-503 each bind ATP; that span reads LGEGCFGQV. Residue Ser-573 is modified to Phosphoserine. Residue Asp-612 is the Proton acceptor of the active site. 3 positions are modified to phosphotyrosine; by autocatalysis: Tyr-642, Tyr-643, and Tyr-754.

Belongs to the protein kinase superfamily. Tyr protein kinase family. Fibroblast growth factor receptor subfamily. In terms of assembly, monomer. Homodimer after ligand binding. Interacts with FGF1, FGF2, FGF4, FGF6, FGF8, FGF9, FGF16, FGF17, FGF18, FGF19, FGF21 and FGF23 (in vitro). Binding affinity for FGF family members is enhanced by interactions between FGFs and heparan sulfate proteoglycans. Interacts with KLB; this strongly increases the affinity for FGF19 and FGF23. Affinity for FGF19 is strongly increased by KLB and sulfated glycosaminoglycans. KLB and KL both interact with the core-glycosylated FGFR4 in the endoplasmic reticulum and promote its degradation, so that only FGFR4 with fully mature N-glycans is expressed at the cell surface. Identified in a complex with NCAM1, CDH2, PLCG1, FRS2, SRC, SHC1, GAP43 and CTTN. Interacts with MMP14 and HIP1. Interacts with STAT3. N-glycosylated. Full maturation of the glycan chains in the Golgi is essential for high affinity interaction with FGF19. Post-translationally, ubiquitinated. Subject to proteasomal degradation when not fully glycosylated. In terms of processing, autophosphorylated. Binding of FGF family members together with heparan sulfate proteoglycan or heparin promotes receptor dimerization and autophosphorylation on tyrosine residues. Autophosphorylation occurs in trans between the two FGFR molecules present in the dimer. In terms of tissue distribution, expressed in gastrointestinal epithelial cells, pancreas, and gastric and pancreatic cancer cell lines.

It localises to the cell membrane. The protein localises to the endosome. Its subcellular location is the endoplasmic reticulum. The protein resides in the secreted. The enzyme catalyses L-tyrosyl-[protein] + ATP = O-phospho-L-tyrosyl-[protein] + ADP + H(+). Present in an inactive conformation in the absence of bound ligand. Ligand binding leads to dimerization and activation by autophosphorylation on tyrosine residues. Tyrosine-protein kinase that acts as a cell-surface receptor for fibroblast growth factors and plays a role in the regulation of cell proliferation, differentiation and migration, and in regulation of lipid metabolism, bile acid biosynthesis, glucose uptake, vitamin D metabolism and phosphate homeostasis. Required for normal down-regulation of the expression of CYP7A1, the rate-limiting enzyme in bile acid synthesis, in response to FGF19. Phosphorylates PLCG1 and FRS2. Ligand binding leads to the activation of several signaling cascades. Activation of PLCG1 leads to the production of the cellular signaling molecules diacylglycerol and inositol 1,4,5-trisphosphate. Phosphorylation of FRS2 triggers recruitment of GRB2, GAB1, PIK3R1 and SOS1, and mediates activation of RAS, MAPK1/ERK2, MAPK3/ERK1 and the MAP kinase signaling pathway, as well as of the AKT1 signaling pathway. Promotes SRC-dependent phosphorylation of the matrix protease MMP14 and its lysosomal degradation. FGFR4 signaling is down-regulated by receptor internalization and degradation; MMP14 promotes internalization and degradation of FGFR4. Mutations that lead to constitutive kinase activation or impair normal FGFR4 inactivation lead to aberrant signaling. The sequence is that of Fibroblast growth factor receptor 4 (FGFR4) from Homo sapiens (Human).